A 543-amino-acid chain; its full sequence is Small conductance calcium-activated potassium channel protein 1 (543 aa).

The disordered stretch occupies residues 1–92 (MNSHSYNGSV…SGKPSNVGHR (92 aa)). The segment covering 65–76 (DQDDDEDDEEDE) has biased composition (acidic residues). The chain crosses the membrane as a helical span at residues 111-131 (LIFGMFGIVVMVTETELSWGV). The helical transmembrane segment at 140–160 (FALKCLISLSTAILLGLVVLY) threads the bilayer. The helical transmembrane segment at 179 to 199 (IAMTCERVFLISLELAVCAIH) threads the bilayer. Residues 228 to 248 (VLLSIPMFLRLYLLGRVMLLH) form a helical membrane-spanning segment. A helical membrane pass occupies residues 277-297 (LMTICPGTVLLVFSISSWIIA). Residues 317–337 (FLGAMWLISITFLSIGYGDMV) constitute an intramembrane region (pore-forming). Residues 346–366 (VCLLTGIMGAGCTALVVAVVA) form a helical membrane-spanning segment. The segment at 384-463 (DTQLTKRVKN…LTDLAKTQTV (80 aa)) is calmodulin-binding. The segment at 505–543 (QAIRPPPPPLPPRPGPGPQDQAARSSPCRWTPVAPSDCG) is disordered. The segment covering 508–521 (RPPPPPLPPRPGPG) has biased composition (pro residues).

This sequence belongs to the potassium channel KCNN family. KCa2.1/KCNN1 subfamily. As to quaternary structure, homodimer. Heteromultimer with KCNN2 and KCNN3. The complex is composed of 4 channel subunits each of which binds to a calmodulin subunit which regulates the channel activity through calcium-binding. Interacts with calmodulin.

It is found in the membrane. The protein localises to the cytoplasm. It localises to the myofibril. Its subcellular location is the sarcomere. The protein resides in the z line. It carries out the reaction K(+)(in) = K(+)(out). With respect to regulation, inhibited by bee venom neurotoxin apamin. Inhibited by d-tubocurarine and tetraethylammonium (TEA). Functionally, small conductance calcium-activated potassium channel that mediates the voltage-independent transmembrane transfer of potassium across the cell membrane through a constitutive interaction with calmodulin which binds the intracellular calcium allowing its opening. The current is characterized by a voltage-independent activation, an intracellular calcium concentration increase-dependent activation and a single-channel conductance of about 3 picosiemens. Also presents an inwardly rectifying current, thus reducing its already small outward conductance of potassium ions, which is particularly the case when the membrane potential displays positive values, above + 20 mV. Activation is followed by membrane hyperpolarization. Thought to regulate neuronal excitability by contributing to the slow component of synaptic afterhyperpolarization. This chain is Small conductance calcium-activated potassium channel protein 1, found in Homo sapiens (Human).